The primary structure comprises 93 residues: Integration host factor subunit beta (93 aa).

Belongs to the bacterial histone-like protein family. In terms of assembly, heterodimer of an alpha and a beta chain.

Its function is as follows. This protein is one of the two subunits of integration host factor, a specific DNA-binding protein that functions in genetic recombination as well as in transcriptional and translational control. The polypeptide is Integration host factor subunit beta (Glaesserella parasuis serovar 5 (strain SH0165) (Haemophilus parasuis)).